A 190-amino-acid polypeptide reads, in one-letter code: Threonylcarbamoyl-AMP synthase (190 aa).

In terms of domain architecture, YrdC-like spans 8-190 (RFRIRQCAAR…DAESGAVIRA (183 aa)).

Belongs to the SUA5 family. TsaC subfamily.

It is found in the cytoplasm. The enzyme catalyses L-threonine + hydrogencarbonate + ATP = L-threonylcarbamoyladenylate + diphosphate + H2O. Functionally, required for the formation of a threonylcarbamoyl group on adenosine at position 37 (t(6)A37) in tRNAs that read codons beginning with adenine. Catalyzes the conversion of L-threonine, HCO(3)(-)/CO(2) and ATP to give threonylcarbamoyl-AMP (TC-AMP) as the acyladenylate intermediate, with the release of diphosphate. The chain is Threonylcarbamoyl-AMP synthase from Alkalilimnicola ehrlichii (strain ATCC BAA-1101 / DSM 17681 / MLHE-1).